A 485-amino-acid polypeptide reads, in one-letter code: Probable glycine dehydrogenase (decarboxylating) subunit 2 (485 aa).

Lys273 is subject to N6-(pyridoxal phosphate)lysine.

This sequence belongs to the GcvP family. C-terminal subunit subfamily. As to quaternary structure, the glycine cleavage system is composed of four proteins: P, T, L and H. In this organism, the P 'protein' is a heterodimer of two subunits. Requires pyridoxal 5'-phosphate as cofactor.

It carries out the reaction N(6)-[(R)-lipoyl]-L-lysyl-[glycine-cleavage complex H protein] + glycine + H(+) = N(6)-[(R)-S(8)-aminomethyldihydrolipoyl]-L-lysyl-[glycine-cleavage complex H protein] + CO2. Functionally, the glycine cleavage system catalyzes the degradation of glycine. The P protein binds the alpha-amino group of glycine through its pyridoxal phosphate cofactor; CO(2) is released and the remaining methylamine moiety is then transferred to the lipoamide cofactor of the H protein. This chain is Probable glycine dehydrogenase (decarboxylating) subunit 2, found in Caldanaerobacter subterraneus subsp. tengcongensis (strain DSM 15242 / JCM 11007 / NBRC 100824 / MB4) (Thermoanaerobacter tengcongensis).